We begin with the raw amino-acid sequence, 624 residues long: tRNA uridine 5-carboxymethylaminomethyl modification enzyme MnmG (624 aa).

14–19 lines the FAD pocket; sequence GAGHAG. 273–287 serves as a coordination point for NAD(+); sequence GTRYCPSFEDKVVRF.

This sequence belongs to the MnmG family. In terms of assembly, homodimer. Heterotetramer of two MnmE and two MnmG subunits. FAD serves as cofactor.

The protein resides in the cytoplasm. NAD-binding protein involved in the addition of a carboxymethylaminomethyl (cmnm) group at the wobble position (U34) of certain tRNAs, forming tRNA-cmnm(5)s(2)U34. This chain is tRNA uridine 5-carboxymethylaminomethyl modification enzyme MnmG, found in Syntrophomonas wolfei subsp. wolfei (strain DSM 2245B / Goettingen).